Here is a 63-residue protein sequence, read N- to C-terminus: Jingdongin-1 (63 aa).

Positions 1–22 (MLTLKKSMLLLFFLGTINLSLC) are cleaved as a signal peptide. The propeptide occupies 23-44 (EQERDADEEERRDDDEMDVEVE). Cys57 and Cys63 form a disulfide bridge.

In terms of tissue distribution, expressed by the skin glands.

The protein localises to the secreted. Its function is as follows. The synthetic peptide has antimicrobial activity against Gram-negative bacterium B.dysenteriae (MIC=35 ug/ml), against Gram-positive bacteria S.aureus ATCC 2592 (MIC=4.7 ug/ml) and B.subtilis ATCC 6633 (MIC=9.38 ug/ml) and against fungus C.albicans (MIC=18.75 ug/ml). Has no activity against Gram-negative bacterium E.coli ATCC 25922 but exhibits low hemolytic activity at concentrations up to 200 ug/ml. This is Jingdongin-1 from Amolops jingdongensis (Chinese torrent frog).